The sequence spans 103 residues: ATP synthase subunit f, mitochondrial (103 aa).

The transit peptide at 1-6 (MIFRRQ) directs the protein to the mitochondrion.

F-type ATP synthases have 2 components, the catalytic core F(1) and the membrane-embedded component F(0), linked together by a central stalk and a peripheral stalk. The central stalk, also called rotor shaft, is often seen as part of F(1). The peripheral stalk is seen as part of F(0). F(0) contains the membrane channel next to the rotor. F-type ATP synthases form dimers but each monomer functions independently in ATP generation. The dimer consists of 17 different polypeptides: ATP1 (subunit alpha, 3 molecules per monomer, part of F(1)), ATP2 (subunit beta, 3 copies per monomer, part of F(1)), ATP3 (subunit gamma, part of the central stalk), ATP4 (subunit b, part of the peripheral stalk), ATP5/OSCP (subunit 5/OSCP, part of the peripheral stalk), ATP6 (subunit a, part of the peripheral stalk), ATP7 (subunit d, part of the peripheral stalk), ATP8 (subunit 8, part of the peripheral stalk), OLI1 (subunit c, part of the rotor, 10 molecules per monomer), ATP14 (subunit h, part of the peripheral stalk), ATP15 (subunit epsilon, part of the central stalk), ATP16 (subunit delta, part of the central stalk), ATP17 (subunit f, part of the peripheral stalk), ATP18 (subunit i/j, part of the peripheral stalk), ATP19 (subunit k, dimer-specific, at interface between monomers), ATP20 (subunit g, at interface between monomers), TIM11 (subunit e, at interface between monomers).

The protein resides in the mitochondrion inner membrane. Mitochondrial membrane ATP synthase (F(1)F(0) ATP synthase or Complex V) produces ATP from ADP in the presence of a proton gradient across the membrane which is generated by electron transport complexes of the respiratory chain. F-type ATP synthases consist of two structural domains, F(1) - containing the extramembraneous catalytic core, and F(0) - containing the membrane proton channel, linked together by a central stalk and a peripheral stalk. During catalysis, ATP synthesis in the catalytic domain of F(1) is coupled via a rotary mechanism of the central stalk subunits to proton translocation. Part of the complex F(0) domain. Minor subunit located with subunit a/ATP6 in the membrane. The protein is ATP synthase subunit f, mitochondrial of Yarrowia lipolytica (strain CLIB 122 / E 150) (Yeast).